A 261-amino-acid chain; its full sequence is Cytochrome c oxidase subunit 3 (261 aa).

Residues 1 to 15 (MTHQTHAYHMVNPSP) are Mitochondrial matrix-facing. A helical membrane pass occupies residues 16–34 (WPLTGALSALLMTSGLTMW). At 35-40 (FHFNSM) the chain is on the mitochondrial intermembrane side. Residues 41 to 66 (TLLMIGLTTNMLTMYQWWRDVIREST) form a helical membrane-spanning segment. Residues 67 to 72 (FQGHHT) lie on the Mitochondrial matrix side of the membrane. A helical transmembrane segment spans residues 73-105 (PAVQKGLRYGMILFIISEVLFFTGFFWAFYHSS). Residues 106-128 (LAPTPELGGCWPPTGIHPLNPLE) lie on the Mitochondrial intermembrane side of the membrane. Residues 129–152 (VPLLNTSVLLASGVSITWAHHSLM) traverse the membrane as a helical segment. The Mitochondrial matrix portion of the chain corresponds to 153–155 (EGD). A helical transmembrane segment spans residues 156–183 (RKHMLQALFITITLGVYFTLLQASEYYE). Residues 184–190 (APFTISD) are Mitochondrial intermembrane-facing. A helical transmembrane segment spans residues 191 to 223 (GVYGSTFFVATGFHGLHVIIGSTFLIVCFFRQL). Residues 224-232 (KFHFTSNHH) are Mitochondrial matrix-facing. A helical membrane pass occupies residues 233–256 (FGFEAAAWYWHFVDVVWLFLYVSI). Residues 257 to 261 (YWWGS) are Mitochondrial intermembrane-facing.

This sequence belongs to the cytochrome c oxidase subunit 3 family. As to quaternary structure, component of the cytochrome c oxidase (complex IV, CIV), a multisubunit enzyme composed of 14 subunits. The complex is composed of a catalytic core of 3 subunits MT-CO1, MT-CO2 and MT-CO3, encoded in the mitochondrial DNA, and 11 supernumerary subunits COX4I1 (or COX4I2), COX5A, COX5B, COX6A2 (or COX6A1), COX6B1 (or COX6B2), COX6C, COX7A1 (or COX7A2), COX7B, COX7C, COX8B and NDUFA4, which are encoded in the nuclear genome. The complex exists as a monomer or a dimer and forms supercomplexes (SCs) in the inner mitochondrial membrane with NADH-ubiquinone oxidoreductase (complex I, CI) and ubiquinol-cytochrome c oxidoreductase (cytochrome b-c1 complex, complex III, CIII), resulting in different assemblies (supercomplex SCI(1)III(2)IV(1) and megacomplex MCI(2)III(2)IV(2)).

It is found in the mitochondrion inner membrane. It carries out the reaction 4 Fe(II)-[cytochrome c] + O2 + 8 H(+)(in) = 4 Fe(III)-[cytochrome c] + 2 H2O + 4 H(+)(out). Its function is as follows. Component of the cytochrome c oxidase, the last enzyme in the mitochondrial electron transport chain which drives oxidative phosphorylation. The respiratory chain contains 3 multisubunit complexes succinate dehydrogenase (complex II, CII), ubiquinol-cytochrome c oxidoreductase (cytochrome b-c1 complex, complex III, CIII) and cytochrome c oxidase (complex IV, CIV), that cooperate to transfer electrons derived from NADH and succinate to molecular oxygen, creating an electrochemical gradient over the inner membrane that drives transmembrane transport and the ATP synthase. Cytochrome c oxidase is the component of the respiratory chain that catalyzes the reduction of oxygen to water. Electrons originating from reduced cytochrome c in the intermembrane space (IMS) are transferred via the dinuclear copper A center (CU(A)) of subunit 2 and heme A of subunit 1 to the active site in subunit 1, a binuclear center (BNC) formed by heme A3 and copper B (CU(B)). The BNC reduces molecular oxygen to 2 water molecules using 4 electrons from cytochrome c in the IMS and 4 protons from the mitochondrial matrix. The sequence is that of Cytochrome c oxidase subunit 3 (MT-CO3) from Bos taurus (Bovine).